Reading from the N-terminus, the 568-residue chain is Cyclin-dependent kinase-like 2 (568 aa).

Residues 4 to 289 (YENLGLVGEG…CADLLRHDFF (286 aa)) form the Protein kinase domain. ATP contacts are provided by residues 10–18 (VGEGSYGMV) and K33. The [NKR]KIAxRE motif lies at 45-51 (KKIAMRE). The active-site Proton acceptor is the D126. 2 disordered regions span residues 309-333 (DARNNSLPKKSQNRKKEKDDALGEE) and 545-568 (SHQGAGSPLSDDSEADLPRMEHQH). Over residues 322–333 (RKKEKDDALGEE) the composition is skewed to basic and acidic residues.

The protein belongs to the protein kinase superfamily. CMGC Ser/Thr protein kinase family. CDC2/CDKX subfamily. In terms of tissue distribution, expressed in testis, kidney, lung and brain.

Its subcellular location is the cytoplasm. The protein resides in the nucleus. It catalyses the reaction L-seryl-[protein] + ATP = O-phospho-L-seryl-[protein] + ADP + H(+). It carries out the reaction L-threonyl-[protein] + ATP = O-phospho-L-threonyl-[protein] + ADP + H(+). The polypeptide is Cyclin-dependent kinase-like 2 (Mus musculus (Mouse)).